Here is a 396-residue protein sequence, read N- to C-terminus: Multidrug efflux protein YfmO (396 aa).

12 consecutive transmembrane segments (helical) span residues 20–40, 56–76, 80–100, 114–134, 142–162, 171–191, 214–234, 249–269, 278–298, 301–321, 339–359, and 364–384; these read VWAV…VDPI, SLLF…SGAI, IGAK…AGLG, GGWG…IVGV, AIIL…LAGG, APFF…SFML, GLLT…ILLA, YVFF…APLV, SLVV…IWTD, TLII…NTIM, AYSS…GMLS, and ASTP…VLLM.

This sequence belongs to the major facilitator superfamily.

The protein localises to the cell membrane. Acts to efflux copper or a copper complex. It is possible that YfmO could contribute to copper resistance. The protein is Multidrug efflux protein YfmO (yfmO) of Bacillus subtilis (strain 168).